Here is a 169-residue protein sequence, read N- to C-terminus: Allophycocyanin subunit beta-18 (169 aa).

Asn-72 bears the N4-methylasparagine mark. Cys-82 contributes to the (2R,3E)-phycocyanobilin binding site.

Belongs to the phycobiliprotein family. As to quaternary structure, heterodimer of ApcE and this beta chain. Contains one covalently linked bilin chromophore.

Its subcellular location is the cellular thylakoid membrane. A variant beta-allophycocyanin (AP) which forms a complex with ApcE, a phycobilisome terminal emitter that influences energy transfer to photosystem II. This chain is Allophycocyanin subunit beta-18 (apcF), found in Synechocystis sp. (strain ATCC 27184 / PCC 6803 / Kazusa).